The primary structure comprises 90 residues: Small ribosomal subunit protein uS15c (90 aa).

The protein belongs to the universal ribosomal protein uS15 family. As to quaternary structure, part of the 30S ribosomal subunit.

Its subcellular location is the plastid. The protein resides in the chloroplast. This chain is Small ribosomal subunit protein uS15c (rps15), found in Dioscorea elephantipes (Elephant's foot yam).